Reading from the N-terminus, the 428-residue chain is Histidine--tRNA ligase (428 aa).

It belongs to the class-II aminoacyl-tRNA synthetase family. In terms of assembly, homodimer.

It is found in the cytoplasm. It catalyses the reaction tRNA(His) + L-histidine + ATP = L-histidyl-tRNA(His) + AMP + diphosphate + H(+). The protein is Histidine--tRNA ligase of Lactobacillus johnsonii (strain CNCM I-12250 / La1 / NCC 533).